Consider the following 686-residue polypeptide: CAI-1 autoinducer sensor kinase/phosphatase CqsS (686 aa).

6 helical membrane-spanning segments follow: residues 21-41 (LVGWMGMLGFPAYYFIWEYWF), 47-64 (NLGLRCAAAVLFGGLVFR), 77-97 (GYFLFTIGFCLPFFFAFMMLM), 100-120 (WSTIWAMSFMASIFLHILLVH), 124-144 (VMALQALFSVLVAYLAVYGLT), and 152-172 (IEWQYIPIFLFTYVFGNLCFF). The region spanning 191–416 (GIAHEMRNPL…EFVLSFPRYD (226 aa)) is the Histidine kinase domain. Residue His-194 is modified to Phosphohistidine; by autocatalysis. In terms of domain architecture, Response regulatory spans 569–686 (RILVVDDNQS…VLLNKVAAWV (118 aa)). Asp-618 carries the 4-aspartylphosphate modification.

It is found in the cell membrane. The catalysed reaction is ATP + protein L-histidine = ADP + protein N-phospho-L-histidine.. Its function is as follows. Senses the quorum-sensing autoinducer CAI-1 ((S)-3-hydroxytridecan-4-one) which probably functions as an intragenus signal. The sensory signal is then relayed to LuxU and LuxO. This chain is CAI-1 autoinducer sensor kinase/phosphatase CqsS (cqsS), found in Vibrio cholerae serotype O1 (strain ATCC 39315 / El Tor Inaba N16961).